A 258-amino-acid polypeptide reads, in one-letter code: Ribonuclease PH (258 aa).

Phosphate is bound by residues Arg-88 and 126–128 (GTR).

This sequence belongs to the RNase PH family. In terms of assembly, homohexameric ring arranged as a trimer of dimers.

It carries out the reaction tRNA(n+1) + phosphate = tRNA(n) + a ribonucleoside 5'-diphosphate. In terms of biological role, phosphorolytic 3'-5' exoribonuclease that plays an important role in tRNA 3'-end maturation. Removes nucleotide residues following the 3'-CCA terminus of tRNAs; can also add nucleotides to the ends of RNA molecules by using nucleoside diphosphates as substrates, but this may not be physiologically important. Probably plays a role in initiation of 16S rRNA degradation (leading to ribosome degradation) during starvation. This Mycobacteroides abscessus (strain ATCC 19977 / DSM 44196 / CCUG 20993 / CIP 104536 / JCM 13569 / NCTC 13031 / TMC 1543 / L948) (Mycobacterium abscessus) protein is Ribonuclease PH.